A 237-amino-acid polypeptide reads, in one-letter code: Peptidase E (237 aa).

Active-site charge relay system residues include Ser122, Asp137, and His159.

The protein belongs to the peptidase S51 family.

The protein localises to the cytoplasm. It carries out the reaction Dipeptidase E catalyzes the hydrolysis of dipeptides Asp-|-Xaa. It does not act on peptides with N-terminal Glu, Asn or Gln, nor does it cleave isoaspartyl peptides.. Hydrolyzes dipeptides containing N-terminal aspartate residues. May play a role in allowing the cell to use peptide aspartate to spare carbon otherwise required for the synthesis of the aspartate family of amino acids. In Shewanella baltica (strain OS185), this protein is Peptidase E.